The chain runs to 210 residues: Ribosomal RNA large subunit methyltransferase E (210 aa).

S-adenosyl-L-methionine-binding residues include glycine 55, tryptophan 57, aspartate 75, aspartate 93, and aspartate 117. Lysine 157 acts as the Proton acceptor in catalysis. Positions 175 to 210 (YRQVKTTKPPSSRKKSSEMYVVGLDFKPKKNKKSKD) are disordered.

This sequence belongs to the class I-like SAM-binding methyltransferase superfamily. RNA methyltransferase RlmE family.

It is found in the cytoplasm. It carries out the reaction uridine(2552) in 23S rRNA + S-adenosyl-L-methionine = 2'-O-methyluridine(2552) in 23S rRNA + S-adenosyl-L-homocysteine + H(+). Specifically methylates the uridine in position 2552 of 23S rRNA at the 2'-O position of the ribose in the fully assembled 50S ribosomal subunit. The protein is Ribosomal RNA large subunit methyltransferase E of Methanobrevibacter smithii (strain ATCC 35061 / DSM 861 / OCM 144 / PS).